Consider the following 1859-residue polypeptide: Protein TIC 214 (1859 aa).

6 helical membrane-spanning segments follow: residues 18–38 (IINS…FSIG), 64–84 (FITG…HLAL), 87–107 (PHTI…WNNH), 124–144 (LSIQ…HFIL), 172–192 (VGWL…LFWI), and 221–241 (IFSI…PAPI). The tract at residues 247 to 314 (KETSKTEERG…TEEIRVNGKE (68 aa)) is disordered. A compositionally biased stretch (acidic residues) spans 256 to 268 (GESEEERDVEIET). The span at 273–284 (KGTKQEQERSTE) shows a compositional bias: basic and acidic residues. The segment covering 295 to 306 (EKEDPDKIDETE) has biased composition (acidic residues).

The protein belongs to the TIC214 family. Part of the Tic complex.

The protein resides in the plastid. Its subcellular location is the chloroplast inner membrane. In terms of biological role, involved in protein precursor import into chloroplasts. May be part of an intermediate translocation complex acting as a protein-conducting channel at the inner envelope. This chain is Protein TIC 214, found in Buxus microphylla (Littleleaf boxwood).